We begin with the raw amino-acid sequence, 101 residues long: NAD(P)H-quinone oxidoreductase subunit 4L, chloroplastic (101 aa).

3 helical membrane passes run 2-22 (ILEH…YGLI), 32-52 (MCLE…SDFF), and 61-81 (IFSI…LAIV).

Belongs to the complex I subunit 4L family. As to quaternary structure, NDH is composed of at least 16 different subunits, 5 of which are encoded in the nucleus.

It localises to the plastid. It is found in the chloroplast thylakoid membrane. The catalysed reaction is a plastoquinone + NADH + (n+1) H(+)(in) = a plastoquinol + NAD(+) + n H(+)(out). It catalyses the reaction a plastoquinone + NADPH + (n+1) H(+)(in) = a plastoquinol + NADP(+) + n H(+)(out). NDH shuttles electrons from NAD(P)H:plastoquinone, via FMN and iron-sulfur (Fe-S) centers, to quinones in the photosynthetic chain and possibly in a chloroplast respiratory chain. The immediate electron acceptor for the enzyme in this species is believed to be plastoquinone. Couples the redox reaction to proton translocation, and thus conserves the redox energy in a proton gradient. The chain is NAD(P)H-quinone oxidoreductase subunit 4L, chloroplastic from Oenothera argillicola (Appalachian evening primrose).